A 201-amino-acid polypeptide reads, in one-letter code: Holliday junction branch migration complex subunit RuvA (201 aa).

The interval 1 to 61 (MIEFVKGTID…EDAFSLYGFS (61 aa)) is domain I. Residues 62-140 (TREEKALFTK…DVVPEMIDNL (79 aa)) form a domain II region. A flexible linker region spans residues 141-150 (FNHEARIEKQ). The segment at 151-201 (EAETALDEALEALRVLGYAEKEIKKVLPHLKEETALSTDQYVKKALQKLLK) is domain III.

The protein belongs to the RuvA family. In terms of assembly, homotetramer. Forms an RuvA(8)-RuvB(12)-Holliday junction (HJ) complex. HJ DNA is sandwiched between 2 RuvA tetramers; dsDNA enters through RuvA and exits via RuvB. An RuvB hexamer assembles on each DNA strand where it exits the tetramer. Each RuvB hexamer is contacted by two RuvA subunits (via domain III) on 2 adjacent RuvB subunits; this complex drives branch migration. In the full resolvosome a probable DNA-RuvA(4)-RuvB(12)-RuvC(2) complex forms which resolves the HJ.

It is found in the cytoplasm. Functionally, the RuvA-RuvB-RuvC complex processes Holliday junction (HJ) DNA during genetic recombination and DNA repair, while the RuvA-RuvB complex plays an important role in the rescue of blocked DNA replication forks via replication fork reversal (RFR). RuvA specifically binds to HJ cruciform DNA, conferring on it an open structure. The RuvB hexamer acts as an ATP-dependent pump, pulling dsDNA into and through the RuvAB complex. HJ branch migration allows RuvC to scan DNA until it finds its consensus sequence, where it cleaves and resolves the cruciform DNA. In Bacillus velezensis (strain DSM 23117 / BGSC 10A6 / LMG 26770 / FZB42) (Bacillus amyloliquefaciens subsp. plantarum), this protein is Holliday junction branch migration complex subunit RuvA.